We begin with the raw amino-acid sequence, 280 residues long: 3-methyl-2-oxobutanoate hydroxymethyltransferase (280 aa).

Mg(2+) contacts are provided by Asp-61 and Asp-100. 3-methyl-2-oxobutanoate is bound by residues 61–62 (DS), Asp-100, and Lys-130. Residue Glu-132 participates in Mg(2+) binding. Glu-198 serves as the catalytic Proton acceptor.

It belongs to the PanB family. As to quaternary structure, homodecamer; pentamer of dimers. Mg(2+) serves as cofactor.

The protein localises to the cytoplasm. It catalyses the reaction 3-methyl-2-oxobutanoate + (6R)-5,10-methylene-5,6,7,8-tetrahydrofolate + H2O = 2-dehydropantoate + (6S)-5,6,7,8-tetrahydrofolate. It participates in cofactor biosynthesis; (R)-pantothenate biosynthesis; (R)-pantoate from 3-methyl-2-oxobutanoate: step 1/2. Functionally, catalyzes the reversible reaction in which hydroxymethyl group from 5,10-methylenetetrahydrofolate is transferred onto alpha-ketoisovalerate to form ketopantoate. The protein is 3-methyl-2-oxobutanoate hydroxymethyltransferase of Mycolicibacterium vanbaalenii (strain DSM 7251 / JCM 13017 / BCRC 16820 / KCTC 9966 / NRRL B-24157 / PYR-1) (Mycobacterium vanbaalenii).